Reading from the N-terminus, the 121-residue chain is NADH-quinone oxidoreductase subunit A (121 aa).

3 helical membrane-spanning segments follow: residues 8-28, 65-85, and 93-113; these read YLPIFMQMGLAVGFVVLTIIG, LVAILFVLFDVEVIFLYPWAI, and QGMIKMVIFMSLLLVGFFYII.

Belongs to the complex I subunit 3 family. As to quaternary structure, NDH-1 is composed of 14 different subunits. Subunits NuoA, H, J, K, L, M, N constitute the membrane sector of the complex.

It localises to the cell inner membrane. The catalysed reaction is a quinone + NADH + 5 H(+)(in) = a quinol + NAD(+) + 4 H(+)(out). In terms of biological role, NDH-1 shuttles electrons from NADH, via FMN and iron-sulfur (Fe-S) centers, to quinones in the respiratory chain. The immediate electron acceptor for the enzyme in this species is believed to be a menaquinone. Couples the redox reaction to proton translocation (for every two electrons transferred, four hydrogen ions are translocated across the cytoplasmic membrane), and thus conserves the redox energy in a proton gradient. The polypeptide is NADH-quinone oxidoreductase subunit A (Flavobacterium psychrophilum (strain ATCC 49511 / DSM 21280 / CIP 103535 / JIP02/86)).